The sequence spans 306 residues: Lipoyl synthase (306 aa).

The [4Fe-4S] cluster site is built by Cys-55, Cys-60, Cys-66, Cys-81, Cys-85, Cys-88, and Ser-294. The region spanning 67–283 (WNHRTATFLL…RSYALARGFT (217 aa)) is the Radical SAM core domain.

Belongs to the radical SAM superfamily. Lipoyl synthase family. [4Fe-4S] cluster is required as a cofactor.

It is found in the cytoplasm. The catalysed reaction is [[Fe-S] cluster scaffold protein carrying a second [4Fe-4S](2+) cluster] + N(6)-octanoyl-L-lysyl-[protein] + 2 oxidized [2Fe-2S]-[ferredoxin] + 2 S-adenosyl-L-methionine + 4 H(+) = [[Fe-S] cluster scaffold protein] + N(6)-[(R)-dihydrolipoyl]-L-lysyl-[protein] + 4 Fe(3+) + 2 hydrogen sulfide + 2 5'-deoxyadenosine + 2 L-methionine + 2 reduced [2Fe-2S]-[ferredoxin]. It participates in protein modification; protein lipoylation via endogenous pathway; protein N(6)-(lipoyl)lysine from octanoyl-[acyl-carrier-protein]: step 2/2. Functionally, catalyzes the radical-mediated insertion of two sulfur atoms into the C-6 and C-8 positions of the octanoyl moiety bound to the lipoyl domains of lipoate-dependent enzymes, thereby converting the octanoylated domains into lipoylated derivatives. This Chloroflexus aurantiacus (strain ATCC 29364 / DSM 637 / Y-400-fl) protein is Lipoyl synthase.